The chain runs to 221 residues: Protein RER1D (221 aa).

4 helical membrane-spanning segments follow: residues 41 to 58 (IVRRWLVTLVAAVIYIYR), 64 to 84 (GYFVISYGLATYILNLLIGFL), 128 to 148 (FVVAFVMTFFSFLDVPVFWPI), and 149 to 169 (LLCYWLVLYSLTMKRLIVHMF). Residues 200 to 221 (KGDGGDDRPSSSNSSQGNEKQD) form a disordered region. The segment covering 209 to 221 (SSSNSSQGNEKQD) has biased composition (polar residues).

The protein belongs to the RER1 family.

Its subcellular location is the membrane. Involved in the retrieval of endoplasmic reticulum membrane proteins from the early Golgi compartment. The sequence is that of Protein RER1D from Arabidopsis thaliana (Mouse-ear cress).